A 597-amino-acid polypeptide reads, in one-letter code: Alpha-1,2-mannosyltransferase MNN2 (597 aa).

Residues 1 to 12 lie on the Cytoplasmic side of the membrane; sequence MLLTKRFSKLFK. The helical; Signal-anchor for type II membrane protein transmembrane segment at 13–28 threads the bilayer; sequence LTFIVLILCGLFVITN. At 29–597 the chain is on the extracellular side; it reads KYMDENTSVK…STHDKAIAGK (569 aa). N34, N363, and N473 each carry an N-linked (GlcNAc...) asparagine glycan.

This sequence belongs to the MNN1/MNT family. In terms of assembly, interacts with SVP26.

It is found in the golgi apparatus membrane. Its pathway is protein modification; protein glycosylation. Alpha-1,2-mannosyltransferase, responsible for addition of the first alpha-1,2-linked mannose to form the branches on the mannan backbone of oligosaccharides. In Saccharomyces cerevisiae (strain ATCC 204508 / S288c) (Baker's yeast), this protein is Alpha-1,2-mannosyltransferase MNN2 (MNN2).